A 1827-amino-acid chain; its full sequence is Phenolphthiocerol/phthiocerol polyketide synthase subunit C (1827 aa).

The Ketosynthase family 3 (KS3) domain occupies 35 to 461 (CEPVAVVGIG…GTNAHVVVEQ (427 aa)). Catalysis depends on for beta-ketoacyl synthase activity residues cysteine 207, histidine 342, and histidine 383. The segment at 566–876 (VFVYSGQGSQ…LAAVGVAASE (311 aa)) is acyltransferase. The active-site For malonyltransferase activity is the serine 654. An N-terminal hotdog fold region spans residues 910 to 1037 (HPLLGAHIEM…AKVEQSPREC (128 aa)). The interval 910–1076 (HPLLGAHIEM…QHHGPAFAAL (167 aa)) is dehydratase. In terms of domain architecture, PKS/mFAS DH spans 910–1198 (HPLLGAHIEM…LRRVERRAVP (289 aa)). Residue histidine 942 is the Proton acceptor; for dehydratase activity of the active site. A C-terminal hotdog fold region spans residues 1050–1198 (GTTVSPADFY…LRRVERRAVP (149 aa)). Catalysis depends on aspartate 1111, which acts as the Proton donor; for dehydratase activity. A beta-ketoacyl reductase region spans residues 1439 to 1617 (ASYVVTGGLG…VINWGPWSEV (179 aa)). NADP(+) is bound at residue 1440–1485 (SYVVTGGLGGLGLVVARWLVDRGAGRVVLGGRSDPTDEQCNVLAEL). The Carrier domain occupies 1706–1785 (RAVTERMCAR…DLTADLMRQL (80 aa)). Serine 1745 carries the post-translational modification O-(pantetheine 4'-phosphoryl)serine.

It depends on NADP(+) as a cofactor. Pantetheine 4'-phosphate serves as cofactor.

It catalyses the reaction icosanoyl-[(phenol)carboxyphthiodiolenone synthase] + 2 (S)-methylmalonyl-CoA + 3 malonyl-CoA + 5 NADPH + 10 H(+) = C32-carboxyphthiodiolenone-[(phenol)carboxyphthiodiolenone synthase] + 5 CO2 + 5 NADP(+) + 5 CoA + 2 H2O. The enzyme catalyses docosanoyl-[(phenol)carboxyphthiodiolenone synthase] + 2 (S)-methylmalonyl-CoA + 3 malonyl-CoA + 5 NADPH + 10 H(+) = C34-carboxyphthiodiolenone-[(phenol)carboxyphthiodiolenone synthase] + 5 CO2 + 5 NADP(+) + 5 CoA + 2 H2O. The catalysed reaction is 17-(4-hydroxyphenyl)heptadecanoyl-[(phenol)carboxyphthiodiolenone synthase] + 2 (S)-methylmalonyl-CoA + 3 malonyl-CoA + 5 NADPH + 10 H(+) = C35-(phenol)carboxyphthiodiolenone-[(phenol)carboxyphthiodiolenone synthase] + 5 CO2 + 5 NADP(+) + 5 CoA + 2 H2O. It carries out the reaction 19-(4-hydroxyphenyl)nonadecanoyl-[(phenol)carboxyphthiodiolenone synthase] + 2 (S)-methylmalonyl-CoA + 3 malonyl-CoA + 5 NADPH + 10 H(+) = C37-(phenol)carboxyphthiodiolenone-[(phenol)carboxyphthiodiolenone synthase] + 5 CO2 + 5 NADP(+) + 5 CoA + 2 H2O. It functions in the pathway lipid metabolism; fatty acid biosynthesis. Functionally, part of the PpsABCDE complex involved in the biosynthesis of the lipid core common to phthiocerols and phenolphthiocerols by successive additions of malonyl-CoA or methylmalonyl-CoA extender units. PpsA can accept as substrate the activated forms of either icosanoyl (C20), docosanoyl (C22) or lignoceroyl (C24) groups from FadD26, or a (4-hydroxyphenyl)-C17 or (4-hydroxyphenyl)-C19 fatty acyl from FadD29. PpsA initiates the biosynthesis and extends its substrate using a malonyl-CoA extender unit. The PpsB and PpsC proteins add the second and third malonyl-CoA extender units. PpsD adds an (R)-methylmalonyl unit and PpsE adds a second (R)-methylmalonyl unit. The incorporation of the methylmalonyl units results in formation of two branched methyl groups in the elongated product. This is Phenolphthiocerol/phthiocerol polyketide synthase subunit C (ppsD) from Mycobacterium bovis (strain ATCC BAA-935 / AF2122/97).